A 396-amino-acid chain; its full sequence is Acyl-[acyl-carrier-protein] desaturase, chloroplastic (396 aa).

The N-terminal 33 residues, 1 to 33 (MALKFHPLTSQSPKLPSFRMPQLASLRSPKFVM), are a transit peptide targeting the chloroplast. Residues glutamate 138, glutamate 176, histidine 179, glutamate 229, glutamate 262, and histidine 265 each coordinate Fe cation.

This sequence belongs to the fatty acid desaturase type 2 family. Homodimer. Fe(2+) serves as cofactor.

It localises to the plastid. Its subcellular location is the chloroplast. It participates in lipid metabolism; fatty acid metabolism. Functionally, introduces a cis double bond in the acyl chain of an acyl-[acyl-carrier protein]. This Cucumis sativus (Cucumber) protein is Acyl-[acyl-carrier-protein] desaturase, chloroplastic.